Reading from the N-terminus, the 329-residue chain is Flotillin-like protein FloA (329 aa).

2 helical membrane-spanning segments follow: residues 4–24 (FIPF…ILSF) and 27–47 (VGLW…TLVG).

It belongs to the flotillin-like FloA family. Homooligomerizes.

Its subcellular location is the cell membrane. The protein resides in the membrane raft. Found in functional membrane microdomains (FMM) that may be equivalent to eukaryotic membrane rafts. FMMs are highly dynamic and increase in number as cells age. Flotillins are thought to be important factors in membrane fluidity. The sequence is that of Flotillin-like protein FloA from Alkaliphilus metalliredigens (strain QYMF).